Consider the following 474-residue polypeptide: Glutamate--tRNA ligase (474 aa).

Residues 11–21 carry the 'HIGH' region motif; the sequence is PSPTGFLHIGG. The 'KMSKS' region motif lies at 240-244; the sequence is KLSKR. Lys243 provides a ligand contact to ATP.

The protein belongs to the class-I aminoacyl-tRNA synthetase family. Glutamate--tRNA ligase type 1 subfamily. Monomer.

The protein resides in the cytoplasm. The catalysed reaction is tRNA(Glu) + L-glutamate + ATP = L-glutamyl-tRNA(Glu) + AMP + diphosphate. Its function is as follows. Catalyzes the attachment of glutamate to tRNA(Glu) in a two-step reaction: glutamate is first activated by ATP to form Glu-AMP and then transferred to the acceptor end of tRNA(Glu). The sequence is that of Glutamate--tRNA ligase from Bradyrhizobium sp. (strain BTAi1 / ATCC BAA-1182).